The sequence spans 106 residues: uncharacterized protein (106 aa).

The disordered stretch occupies residues 54–106; that stretch reads RSTLVATSPRRRSLVQQRRPPLREQNGGSGSSCVSSGGSASTVKTPGSRRASK. Low complexity predominate over residues 84–94; it reads SSCVSSGGSAS.

This is an uncharacterized protein from Human adenovirus C serotype 2 (HAdV-2).